Here is a 74-residue protein sequence, read N- to C-terminus: uncharacterized protein (74 aa).

Residues 55-74 are disordered; that stretch reads DENSESESKDGASWFKVYRG.

This is an uncharacterized protein from Listeria innocua serovar 6a (strain ATCC BAA-680 / CLIP 11262).